We begin with the raw amino-acid sequence, 216 residues long: Large ribosomal subunit protein uL1B (216 aa).

At Ser11 the chain carries Phosphoserine.

Belongs to the universal ribosomal protein uL1 family. Component of the large ribosomal subunit (LSU). Mature yeast ribosomes consist of a small (40S) and a large (60S) subunit. The 40S small subunit contains 1 molecule of ribosomal RNA (18S rRNA) and at least 33 different proteins. The large 60S subunit contains 3 rRNA molecules (25S, 5.8S and 5S rRNA) and at least 46 different proteins. uL1 forms part of the L1 stalk.

It is found in the cytoplasm. Component of the ribosome, a large ribonucleoprotein complex responsible for the synthesis of proteins in the cell. The small ribosomal subunit (SSU) binds messenger RNAs (mRNAs) and translates the encoded message by selecting cognate aminoacyl-transfer RNA (tRNA) molecules. The large subunit (LSU) contains the ribosomal catalytic site termed the peptidyl transferase center (PTC), which catalyzes the formation of peptide bonds, thereby polymerizing the amino acids delivered by tRNAs into a polypeptide chain. The nascent polypeptides leave the ribosome through a tunnel in the LSU and interact with protein factors that function in enzymatic processing, targeting, and the membrane insertion of nascent chains at the exit of the ribosomal tunnel. uL1 forms part of the L1 stalk, a mobile element that plays a role in evacuating the exit-site tRNA. The chain is Large ribosomal subunit protein uL1B (rpl101) from Schizosaccharomyces pombe (strain 972 / ATCC 24843) (Fission yeast).